We begin with the raw amino-acid sequence, 1058 residues long: SMC5-SMC6 complex localization factor protein 1 (1058 aa).

2 BRCT domains span residues 12–77 (MTGF…IHSA) and 119–196 (GAPG…GDFL). An NSE5-like domain; mediates interaction with SLF2 region spans residues 410 to 1058 (PRGVLNLIES…MMCRSVMEFS (649 aa)). 3 ANK repeats span residues 806 to 836 (KGET…DINV), 840 to 869 (AGWT…EVDL), and 874 to 903 (DGVT…PVLL). Lys931 participates in a covalent cross-link: Glycyl lysine isopeptide (Lys-Gly) (interchain with G-Cter in SUMO2).

As to quaternary structure, interacts (via N-terminus) with SLF2; this interaction links RAD18 to the SMC5-SMC6 complex. Interacts (via BRCT domains) with RAD18; this interaction occurs in a SLF2-independent manner. Interacts with SMC6. Interacts (via BRCT domains) with RAD18 (via C-terminus and phosphorylated form); this interaction is required for efficient repair of UV-induced DNA damage.

The protein localises to the nucleus. The protein resides in the cytoplasm. Its subcellular location is the cytoskeleton. It localises to the microtubule organizing center. It is found in the centrosome. In terms of biological role, plays a role in the DNA damage response (DDR) pathway by regulating postreplication repair of UV-damaged DNA and genomic stability maintenance. The SLF1-SLF2 complex acts to link RAD18 with the SMC5-SMC6 complex at replication-coupled interstrand cross-links (ICL) and DNA double-strand breaks (DSBs) sites on chromatin during DNA repair in response to stalled replication forks. Promotes the recruitment of SLF2 and the SMC5-SMC6 complex to DNA lesions. This is SMC5-SMC6 complex localization factor protein 1 from Homo sapiens (Human).